We begin with the raw amino-acid sequence, 545 residues long: Purple acid phosphatase 13 (545 aa).

The signal sequence occupies residues 1-25 (MVVKYTMSMSFFVIFASTVTIIVHG). N-linked (GlcNAc...) asparagine glycosylation is found at asparagine 125 and asparagine 145. Aspartate 203 lines the Fe cation pocket. A glycan (N-linked (GlcNAc...) asparagine) is linked at asparagine 209. Tyrosine 233 serves as a coordination point for Fe cation. Asparagine 240, asparagine 254, asparagine 306, asparagine 321, asparagine 351, and asparagine 367 each carry an N-linked (GlcNAc...) asparagine glycan. Histidine 389 (proton donor) is an active-site residue. Histidine 416 serves as a coordination point for Zn(2+). 416–418 (HVD) lines the substrate pocket. Residues asparagine 428, asparagine 466, asparagine 475, and asparagine 510 are each glycosylated (N-linked (GlcNAc...) asparagine).

It belongs to the metallophosphoesterase superfamily. Purple acid phosphatase family. Homodimer. The cofactor is Fe cation. Zn(2+) serves as cofactor. In terms of tissue distribution, expressed in stems, leaves, flowers and siliques.

The protein localises to the secreted. It catalyses the reaction a phosphate monoester + H2O = an alcohol + phosphate. This chain is Purple acid phosphatase 13 (PAP13), found in Arabidopsis thaliana (Mouse-ear cress).